The following is a 224-amino-acid chain: Cytochrome c oxidase subunit 2 (224 aa).

The Mitochondrial intermembrane segment spans residues 1 to 26; sequence MSTWGQINLMDPASPIQMEMMLFHDH. Residues 27–48 form a helical membrane-spanning segment; sequence AMAILIGIFTLVSLLGVKLCFN. Over 49-62 the chain is Mitochondrial matrix; that stretch reads TLSTRTMHEAQLLE. Residues 63-82 traverse the membrane as a helical segment; the sequence is TLWTILPAFLLVWLALPSLR. The Mitochondrial intermembrane portion of the chain corresponds to 83–224; the sequence is LLYLLDEQGS…DVKDFIKMCN (142 aa). 6 residues coordinate Cu cation: histidine 161, cysteine 196, glutamate 198, cysteine 200, histidine 204, and methionine 207. Glutamate 198 lines the Mg(2+) pocket.

It belongs to the cytochrome c oxidase subunit 2 family. As to quaternary structure, component of the cytochrome c oxidase (complex IV, CIV), a multisubunit enzyme composed of a catalytic core of 3 subunits and several supernumerary subunits. The complex exists as a monomer or a dimer and forms supercomplexes (SCs) in the inner mitochondrial membrane with ubiquinol-cytochrome c oxidoreductase (cytochrome b-c1 complex, complex III, CIII). Requires Cu cation as cofactor.

The protein resides in the mitochondrion inner membrane. The catalysed reaction is 4 Fe(II)-[cytochrome c] + O2 + 8 H(+)(in) = 4 Fe(III)-[cytochrome c] + 2 H2O + 4 H(+)(out). Component of the cytochrome c oxidase, the last enzyme in the mitochondrial electron transport chain which drives oxidative phosphorylation. The respiratory chain contains 3 multisubunit complexes succinate dehydrogenase (complex II, CII), ubiquinol-cytochrome c oxidoreductase (cytochrome b-c1 complex, complex III, CIII) and cytochrome c oxidase (complex IV, CIV), that cooperate to transfer electrons derived from NADH and succinate to molecular oxygen, creating an electrochemical gradient over the inner membrane that drives transmembrane transport and the ATP synthase. Cytochrome c oxidase is the component of the respiratory chain that catalyzes the reduction of oxygen to water. Electrons originating from reduced cytochrome c in the intermembrane space (IMS) are transferred via the dinuclear copper A center (CU(A)) of subunit 2 and heme A of subunit 1 to the active site in subunit 1, a binuclear center (BNC) formed by heme A3 and copper B (CU(B)). The BNC reduces molecular oxygen to 2 water molecules using 4 electrons from cytochrome c in the IMS and 4 protons from the mitochondrial matrix. The chain is Cytochrome c oxidase subunit 2 (COII) from Albinaria caerulea (Land snail).